A 33-amino-acid chain; its full sequence is AKKYKVRLLSEAEGIDVTIDSADDVYILDAAEE.

The 2Fe-2S ferredoxin-type domain maps to Lys-3–Glu-33.

The protein belongs to the 2Fe2S plant-type ferredoxin family. [2Fe-2S] cluster is required as a cofactor.

It localises to the plastid. Its subcellular location is the chloroplast. Ferredoxins are iron-sulfur proteins that transfer electrons in a wide variety of metabolic reactions. The polypeptide is Ferredoxin (Porphyridium aerugineum (Red microalga)).